Consider the following 34-residue polypeptide: Photosystem II reaction center protein M (34 aa).

Residues 5 to 25 form a helical membrane-spanning segment; the sequence is ILAFIATALFILVPTAFLLII.

It belongs to the PsbM family. In terms of assembly, PSII is composed of 1 copy each of membrane proteins PsbA, PsbB, PsbC, PsbD, PsbE, PsbF, PsbH, PsbI, PsbJ, PsbK, PsbL, PsbM, PsbT, PsbX, PsbY, PsbZ, Psb30/Ycf12, at least 3 peripheral proteins of the oxygen-evolving complex and a large number of cofactors. It forms dimeric complexes.

It is found in the plastid. Its subcellular location is the chloroplast thylakoid membrane. Functionally, one of the components of the core complex of photosystem II (PSII). PSII is a light-driven water:plastoquinone oxidoreductase that uses light energy to abstract electrons from H(2)O, generating O(2) and a proton gradient subsequently used for ATP formation. It consists of a core antenna complex that captures photons, and an electron transfer chain that converts photonic excitation into a charge separation. This subunit is found at the monomer-monomer interface. The polypeptide is Photosystem II reaction center protein M (Phaseolus vulgaris (Kidney bean)).